A 429-amino-acid chain; its full sequence is MSIYHDVIKSEVFPALGCTEPIAVAYAASLAAERLGAEVETVTASVDPGVFKNGFAVTVPKTGGLKGNVIAAALGALIARPELKMEILSGADERLLAQAELLVSSGRATVALVKERTDLYIDVVVTGGGRTARAVLEGGHTNIVRLECDGRILLNADEPVSAVDSHAYRAVLRQMTFSEMIGLLDDLDQGDLVYLKRGVEMNLRIAEEGKQLTKVGHYVEELVRKGFLLADVVSSSKILTASASDARMAGLPYPVMSSGGSGNQGIVAILVPYNVGMFFHVPEETILRSIALSHLVNAYIKCHTGDLAPICGCAIAAGVGAAVAIVYQQAGPDMHKIDLAVNTIISDIGGMLCDGAKGGCALKVVSSTDAAIRAAYMALNGHGISEEEGFVGKSAEETIHNLSRIADKGMALVDDTMLCIMLQKRSTEP.

This sequence belongs to the UPF0597 family.

In Geobacter sulfurreducens (strain ATCC 51573 / DSM 12127 / PCA), this protein is UPF0597 protein GSU1527.